Consider the following 395-residue polypeptide: 8-amino-7-oxononanoate synthase (395 aa).

108–109 (GF) contacts pyridoxal 5'-phosphate. A substrate-binding site is contributed by His-134. Residues Ser-184, 209 to 212 (DDAH), and 240 to 243 (TLSK) contribute to the pyridoxal 5'-phosphate site. N6-(pyridoxal phosphate)lysine is present on Lys-243. Thr-357 serves as a coordination point for substrate.

This sequence belongs to the class-II pyridoxal-phosphate-dependent aminotransferase family. BioF subfamily. Homodimer. Requires pyridoxal 5'-phosphate as cofactor.

The enzyme catalyses 6-carboxyhexanoyl-[ACP] + L-alanine + H(+) = (8S)-8-amino-7-oxononanoate + holo-[ACP] + CO2. The protein operates within cofactor biosynthesis; biotin biosynthesis. In terms of biological role, catalyzes the decarboxylative condensation of pimeloyl-[acyl-carrier protein] and L-alanine to produce 8-amino-7-oxononanoate (AON), [acyl-carrier protein], and carbon dioxide. This chain is 8-amino-7-oxononanoate synthase, found in Fervidobacterium nodosum (strain ATCC 35602 / DSM 5306 / Rt17-B1).